Consider the following 124-residue polypeptide: Single-stranded DNA-binding protein (124 aa).

Belongs to the phi29likevirus single-strand-binding protein family. As to quaternary structure, monomer.

In terms of biological role, single-stranded DNA binding protein required for the elongation during viral DNA replication by strand displacement. Displaced viral DNA strands are transiently coated with the ssDNA-binding protein and therefore protected againt nucleases. The latter is then probably removed by the replisome that performs lagging strand synthesis or during the events that lead up to the recombination process. Has helix-destabilizing activity since it removes secondary structure from the ssDNA in replicative intermediates. This is Single-stranded DNA-binding protein (5) from Bacillus subtilis (Bacteriophage PZA).